Consider the following 290-residue polypeptide: MVDKKLKVVIITGMSGAGKTVAVHSLEDLGYFVIDNMLPGLAERFVDVIEDSREFDKIAMVMDMRSRGFYDEVLPNFEKLKKRADLDVKLLFLDANDVTLISRYKETRRSHPLSPQGRILDGVELERKLSTDLKSQADIVIDTTNVTPRNLKLRLNKLFGHGEGNDFYVEVMSFGFKYGLPLDADIVMDVRFLPNPFYIPELKHLTGNDPAVQNYVMQSPLAKEFYQHLRSLLEIALPGYIKEGKSSLTIAIGCTGGQHRSVTIANKLSADLKEKGYKVNTYHRDIEKAK.

An ATP-binding site is contributed by 13 to 20 (GMSGAGKT). Position 63 to 66 (63 to 66 (DMRS)) interacts with GTP.

The protein belongs to the RapZ-like family.

In terms of biological role, displays ATPase and GTPase activities. This is Nucleotide-binding protein LAR_0375 from Limosilactobacillus reuteri subsp. reuteri (strain JCM 1112) (Lactobacillus reuteri).